A 280-amino-acid chain; its full sequence is Bis(5'-nucleosyl)-tetraphosphatase, symmetrical (280 aa).

This sequence belongs to the Ap4A hydrolase family.

The catalysed reaction is P(1),P(4)-bis(5'-adenosyl) tetraphosphate + H2O = 2 ADP + 2 H(+). Hydrolyzes diadenosine 5',5'''-P1,P4-tetraphosphate to yield ADP. The protein is Bis(5'-nucleosyl)-tetraphosphatase, symmetrical of Shigella flexneri serotype 5b (strain 8401).